A 258-amino-acid polypeptide reads, in one-letter code: MKEILITNDDGYESEGLKKLIKMLTKEFKAKITIVAPASEKSACSHSITLTKPLRFVKVGKRFYKLDDGTPADCVYLALHALYKKRLPDLVISGINKGANVGEDITYSGTCAGAMEAVLQGIPAIALSQFYKKSEKELDYKNALQITKKIIQNIFDKGFPLEKKEFLNINFPAKSKIKGIKICKAGKRVYNFEAHSNVNPRGVEYYWLAAANLDFEDEKNSDIALLKKGYATITPIMLDLTAYEKMKKVKKWLKANDE.

Asp9, Asp10, Ser42, and Asn96 together coordinate a divalent metal cation.

This sequence belongs to the SurE nucleotidase family. It depends on a divalent metal cation as a cofactor.

Its subcellular location is the cytoplasm. The catalysed reaction is a ribonucleoside 5'-phosphate + H2O = a ribonucleoside + phosphate. Functionally, nucleotidase that shows phosphatase activity on nucleoside 5'-monophosphates. The chain is 5'-nucleotidase SurE from Campylobacter jejuni subsp. jejuni serotype O:6 (strain 81116 / NCTC 11828).